A 315-amino-acid polypeptide reads, in one-letter code: Glutaminase (315 aa).

Positions 70, 120, 166, 173, 197, 249, and 267 each coordinate substrate.

This sequence belongs to the glutaminase family. As to quaternary structure, homotetramer.

The enzyme catalyses L-glutamine + H2O = L-glutamate + NH4(+). The chain is Glutaminase from Mesorhizobium japonicum (strain LMG 29417 / CECT 9101 / MAFF 303099) (Mesorhizobium loti (strain MAFF 303099)).